The sequence spans 1515 residues: MTTELNQGEQFVADFRANAAALTTANAYNPEDEHDACGVGFIAAIDGKPRRSVVEKGIEALKAVWHRGAVDADGKTGDGAGIHVAVPQKFFKDHVKVIGHRAPDNKLAVGQVFLPRISLDAQEACRCIVETEILAFGYYIYGWRQVPINVDIIGEKANATRPEIEQIIVGNNKGVSDEQFELDLYIIRRRIEKAVKGEQINDFYICSLSARSIIYKGMFLAEQLTTFYPDLLDERFESDFAIYHQRYSTNTFPTWPLAQPFRMLAHNGEINTVKGNVNWMKAHETRMEHPAFGTHMQDLKPVIGVGLSDSGSLDTVFEVMVRAGRTAPMVKMMLVPQALTSSQTTPDNHKALIQYCNSVMEPWDGPAALAMTDGRWVVGGMDRNGLRPMRYTITTDGLIIGGSETGMVKIDETQVIEKGRLGPGEMIAVDLQSGKLYRDRELKDHLATLKPWDKWVQNTTHLDELVKTASLKGEPSDMDKAELRRRQQAFGLTMEDMELILHPMVEDGKEAIGSMGDDSPIAVLSDKYRGLHHFFRQNFSQVTNPPIDSLRERRVMSLKTRLGNLGNILDEDETQTRLLQLESPVLTTAEFRAMRDYMGDTAAEIDATFPVDGGPEALRDALRRIRQETEDAVRGGATHVILTDEAMGPARAAIPAILATGAVHTHLIRSNLRTFTSLNVRTAEGLDTHYFAVLIGVGATTVNAYLAQEAIAERHRRGLFGSMPLEKGMANYKKAIDDGLLKIMSKMGISVISSYRGGGNFEAIGLSRALVAEHFPAMVSRISGIGLNGIQKKVLEQHATAYNEEVVALPVGGFYRFRKSGDRHGWEGGVIHTLQQAVTNDSYTTFKKYSEQVNKRPPMQLRDLLELRSTKAPVPVDEVESITAIRKRFITPGMSMGALSPEAHGTLNVAMNRIGAKSDSGEGGEDPARFRPDKNGDNWNSAIKQVASGRFGVTAEYLNQCRELEIKVAQGAKPGEGGQLPGFKVTEMIARLRHSTPGVMLISPPPHHDIYSIEDLAQLIYDLKQINPDAKVTVKLVSRSGIGTIAAGVAKANADIILISGNSGGTGASPQTSIKFAGLPWEMGLSEVHQVLTLNRLRHRVRLRTDGGLKTGRDIVIAAMLGAEEFGIGTASLIAMGCIMVRQCHSNTCPVGVCVQDDKLRQKFVGTPEKVVNLFTFLAEEVREILAGLGFRSLNEVIGRTDLLHQVSRGAEHLDDLDLNPRLAQVDPGENARYCTLQGRNEVPDTLDARIVADARPLFEEGEKMQLAYNARNTQRAIGTRLSSMVTRKFGMFGLQPGHITIRLRGTAGQSLGAFAVQGIKLEVMGDANDYVGKGLSGGTIVVRPTTSSPLETNKNTIIGNTVLYGATAGKLFAAGQAGERFAVRNSGATVVVEGCGSNGCEYMTGGTAVILGRVGDNFAAGMTGGMAYVYDLDDSLPLYINDESVIFQRIEVGHYESQLKHLIEEHVTETQSRFAAEILNDWAREVTKFWQVVPKEMLNRLEVPVHLPKAISAE.

Residues 1–36 constitute a propeptide that is removed on maturation; sequence MTTELNQGEQFVADFRANAAALTTANAYNPEDEHDA. Cysteine 37 serves as the catalytic For GATase activity. Positions 37–432 constitute a Glutamine amidotransferase type-2 domain; it reads CGVGFIAAID…PGEMIAVDLQ (396 aa). Positions 916–937 are disordered; it reads AKSDSGEGGEDPARFRPDKNGD. Residues 926–936 show a composition bias toward basic and acidic residues; sequence DPARFRPDKNG. Residues 1085–1142 and 1086–1142 contribute to the FMN site; these read LSEV…IMVR and SEVH…IMVR. Residues cysteine 1138, cysteine 1144, and cysteine 1149 each coordinate [3Fe-4S] cluster.

Belongs to the glutamate synthase family. As to quaternary structure, aggregate of 4 catalytic active heterodimers, consisting of a large and a small subunit. [3Fe-4S] cluster is required as a cofactor. FAD serves as cofactor. The cofactor is FMN.

It carries out the reaction 2 L-glutamate + NADP(+) = L-glutamine + 2-oxoglutarate + NADPH + H(+). Its pathway is amino-acid biosynthesis; L-glutamate biosynthesis via GLT pathway; L-glutamate from 2-oxoglutarate and L-glutamine (NADP(+) route): step 1/1. It functions in the pathway energy metabolism; nitrogen metabolism. This is Glutamate synthase [NADPH] large chain (gltB) from Azospirillum brasilense.